The chain runs to 253 residues: uncharacterized protein (253 aa).

It belongs to the DcsA family.

This is an uncharacterized protein from Bacillus subtilis (strain 168).